A 547-amino-acid polypeptide reads, in one-letter code: Chaperonin GroEL (547 aa).

ATP contacts are provided by residues 30-33, lysine 51, 87-91, glycine 415, 479-481, and aspartate 495; these read TLGP, DGTTT, and NAA.

It belongs to the chaperonin (HSP60) family. Forms a cylinder of 14 subunits composed of two heptameric rings stacked back-to-back. Interacts with the co-chaperonin GroES.

It localises to the cytoplasm. It carries out the reaction ATP + H2O + a folded polypeptide = ADP + phosphate + an unfolded polypeptide.. Functionally, together with its co-chaperonin GroES, plays an essential role in assisting protein folding. The GroEL-GroES system forms a nano-cage that allows encapsulation of the non-native substrate proteins and provides a physical environment optimized to promote and accelerate protein folding. This Cupriavidus necator (strain ATCC 17699 / DSM 428 / KCTC 22496 / NCIMB 10442 / H16 / Stanier 337) (Ralstonia eutropha) protein is Chaperonin GroEL.